Here is a 63-residue protein sequence, read N- to C-terminus: SPbeta prophage-derived uncharacterized protein YotC (63 aa).

This is SPbeta prophage-derived uncharacterized protein YotC (yotC) from Bacillus subtilis (strain 168).